We begin with the raw amino-acid sequence, 358 residues long: DnaJ homolog subfamily C member 18 (358 aa).

Residues 82 to 146 (NYYEILGVSR…DKRLRYDEYG (65 aa)) enclose the J domain. A helical membrane pass occupies residues 228-248 (AFIQLLPVLVIVIISVITQLL).

The protein localises to the endoplasmic reticulum membrane. The protein is DnaJ homolog subfamily C member 18 (DNAJC18) of Bos taurus (Bovine).